The sequence spans 350 residues: Protein RecA (350 aa).

G67–T74 is a binding site for ATP.

The protein belongs to the RecA family.

Its subcellular location is the cytoplasm. Can catalyze the hydrolysis of ATP in the presence of single-stranded DNA, the ATP-dependent uptake of single-stranded DNA by duplex DNA, and the ATP-dependent hybridization of homologous single-stranded DNAs. It interacts with LexA causing its activation and leading to its autocatalytic cleavage. The chain is Protein RecA from Chromobacterium violaceum (strain ATCC 12472 / DSM 30191 / JCM 1249 / CCUG 213 / NBRC 12614 / NCIMB 9131 / NCTC 9757 / MK).